A 173-amino-acid polypeptide reads, in one-letter code: Peptidoglycan-associated lipoprotein (173 aa).

The signal sequence occupies residues 1 to 21; that stretch reads MKSKKIFKILTLLLPMITTFS. A lipid anchor (N-palmitoyl cysteine) is attached at C22. C22 is lipidated: S-diacylglycerol cysteine. Residues 59 to 173 enclose the OmpA-like domain; the sequence is ETLEKLKKGN…KNRRSVIIYQ (115 aa).

This sequence belongs to the Pal lipoprotein family.

The protein resides in the cell outer membrane. The protein is Peptidoglycan-associated lipoprotein of Buchnera aphidicola subsp. Baizongia pistaciae (strain Bp).